Consider the following 277-residue polypeptide: Ribosomal RNA small subunit methyltransferase G (277 aa).

Residues glycine 128, phenylalanine 133, 188 to 189 (SE), and arginine 198 contribute to the S-adenosyl-L-methionine site.

This sequence belongs to the methyltransferase superfamily. RNA methyltransferase RsmG family.

The protein localises to the cytoplasm. The catalysed reaction is guanosine(527) in 16S rRNA + S-adenosyl-L-methionine = N(7)-methylguanosine(527) in 16S rRNA + S-adenosyl-L-homocysteine. Functionally, specifically methylates the N7 position of guanine in position 527 of 16S rRNA. The polypeptide is Ribosomal RNA small subunit methyltransferase G (Nitrobacter winogradskyi (strain ATCC 25391 / DSM 10237 / CIP 104748 / NCIMB 11846 / Nb-255)).